The following is a 273-amino-acid chain: MTSERNTDIEIRLLIEAIYLKYSYDFRNYSGASIKRRILHALRQFDCLTVSALQERVLHDPGMFMQLLQYLTIPVSEMFRDPDHFLAVRNEVVPLLRTWPSIKVWIAGCSTGEEVYSMAILLREEGLLERTIIYATDINPHSLDRAKQGIYSMQSMREYEENYRLAGGRRDFAEYYTAAYGNAIMDSSLRDNVTFADHSLATDSVFSETQLVSCRNVLIYFNKDLQDRALGLFHESLCHRGFLVLGSKESVDFSAYSDRFEPLVKPQRIFRKS.

The CheR-type methyltransferase domain maps to 1–273; that stretch reads MTSERNTDIE…VKPQRIFRKS (273 aa). S-adenosyl-L-methionine-binding positions include Ser76, Arg80, Glu114, Asp137, 199 to 200, and 215 to 216; these read SL and RN.

In Pseudomonas putida (strain ATCC 47054 / DSM 6125 / CFBP 8728 / NCIMB 11950 / KT2440), this protein is Putative methyltransferase Cher3 (cheR3).